The following is a 494-amino-acid chain: MAGSNLLIHLDTIDQNDLIYVERDMNFAQKVGLCFLLYGDDHSDATYILQKLLAMTRSDFPQSDLLIKFAKSRPETWRRHLVEALCIIGARKVLRRLGFCWQELRMHYLPHIAGITLHVHPLLKSLYRMCEELSLVQSGRLLLDVREKVESQQAGDPLRFYDPAYLEIFLLDWLTRRSIKLGDINAAGSDVQLLVGHLKSNGLQAQANLLKDTIISNAPEPDAAGTAAMAVKQEIESDNQQSYCSTQIDALKLTRENAGIALIINQQKFHRNVSRDNMKFLSPDPLRRRDGTDVDKERLIEVFSSMGYNVEAYDNVDHMGIIERIRSACDRSLVRDSLVVFILSHGFEEAVYASNSIAMKITDIEDLLCSYDTLYYKPKLLIIQACQEKLVHKKKPNELFRIDVTTVSPDQHIDMLRAMSTVNGYAALRHTQTGSWFIGSLCDAIDRRSASEHIADILTIVTNEVSKKRGSNDESMVPNVKSTFRQHVYFPPRL.

The propeptide occupies 1–242 (MAGSNLLIHL…QEIESDNQQS (242 aa)). Residues H345 and C386 contribute to the active site. Residues 401–410 (RIDVTTVSPD) constitute a propeptide that is removed on maturation.

This sequence belongs to the peptidase C14A family. Heterotetramer that consists of two anti-parallel arranged heterodimers, each one formed by a 15 kDa (caspase-8 subunit p15) and a 10 kDa (caspase-8 subunit p10) subunit. Interacts (via N-terminus) with Diap2; likely to bind Diap2 simultaneously with Fadd to form a trimeric complex. Interacts with Dark (via N-terminus). Post-translationally, polyubiquitinated by Diap2 following activation of the immune deficiency (Imd) pathway. As to expression, constitutively expressed in fat bodies of larvae and adults.

The protein localises to the cytoplasm. It catalyses the reaction Strict requirement for Asp at position P1 and has a preferred cleavage sequence of (Leu/Asp/Val)-Glu-Thr-Asp-|-(Gly/Ser/Ala).. Its function is as follows. Effector of the programmed cell death (PCD) activators rpr, grim and hid. May play an apoptotic role in the germline as well as soma. Fadd interacts with Dredd to promote cleavage of Dredd and is necessary and sufficient for enhancing Dredd-induced apoptosis. Plays a role in the innate immune response. Required for resistance to Gram-negative bacterial infection. Diap2-mediated ubiquitination of Dredd is critical for processing of imd and rel and the subsequent expression of antimicrobial genes such as DptA. The polypeptide is Caspase-8 (Drosophila melanogaster (Fruit fly)).